We begin with the raw amino-acid sequence, 219 residues long: Octanoyltransferase (219 aa).

Residues 34 to 209 (SESPDELWIV…TFSQLLGYQH (176 aa)) enclose the BPL/LPL catalytic domain. Substrate contacts are provided by residues 73–80 (RGGQVTYH), 140–142 (SLG), and 153–155 (GLA). The active-site Acyl-thioester intermediate is Cys171.

This sequence belongs to the LipB family.

The protein resides in the cytoplasm. It carries out the reaction octanoyl-[ACP] + L-lysyl-[protein] = N(6)-octanoyl-L-lysyl-[protein] + holo-[ACP] + H(+). It participates in protein modification; protein lipoylation via endogenous pathway; protein N(6)-(lipoyl)lysine from octanoyl-[acyl-carrier-protein]: step 1/2. Functionally, catalyzes the transfer of endogenously produced octanoic acid from octanoyl-acyl-carrier-protein onto the lipoyl domains of lipoate-dependent enzymes. Lipoyl-ACP can also act as a substrate although octanoyl-ACP is likely to be the physiological substrate. This Shewanella putrefaciens (strain CN-32 / ATCC BAA-453) protein is Octanoyltransferase.